Here is a 96-residue protein sequence, read N- to C-terminus: Co-chaperonin GroES (96 aa).

It belongs to the GroES chaperonin family. In terms of assembly, heptamer of 7 subunits arranged in a ring. Interacts with the chaperonin GroEL.

It localises to the cytoplasm. In terms of biological role, together with the chaperonin GroEL, plays an essential role in assisting protein folding. The GroEL-GroES system forms a nano-cage that allows encapsulation of the non-native substrate proteins and provides a physical environment optimized to promote and accelerate protein folding. GroES binds to the apical surface of the GroEL ring, thereby capping the opening of the GroEL channel. The protein is Co-chaperonin GroES of Polynucleobacter asymbioticus (strain DSM 18221 / CIP 109841 / QLW-P1DMWA-1) (Polynucleobacter necessarius subsp. asymbioticus).